The following is a 510-amino-acid chain: NAD(P)H-quinone oxidoreductase subunit 2, chloroplastic (510 aa).

Helical transmembrane passes span 28–48, 57–77, 99–119, 124–144, 149–169, 183–203, 227–247, 295–315, 323–343, 354–374, 395–415, 418–438, and 484–504; these read DGSF…LLII, IPWL…TLLF, IFQF…VEYI, MALT…MFLC, LITI…LSGY, YLLM…WLYG, PGIS…LSPA, WHLL…LIAI, MLAY…IVGD, YMLF…LFGL, ALSL…AGFF, LYLF…IGLL, and MIVC…IIAI.

The protein belongs to the complex I subunit 2 family. NDH is composed of at least 16 different subunits, 5 of which are encoded in the nucleus.

It is found in the plastid. The protein resides in the chloroplast thylakoid membrane. It carries out the reaction a plastoquinone + NADH + (n+1) H(+)(in) = a plastoquinol + NAD(+) + n H(+)(out). The catalysed reaction is a plastoquinone + NADPH + (n+1) H(+)(in) = a plastoquinol + NADP(+) + n H(+)(out). Functionally, NDH shuttles electrons from NAD(P)H:plastoquinone, via FMN and iron-sulfur (Fe-S) centers, to quinones in the photosynthetic chain and possibly in a chloroplast respiratory chain. The immediate electron acceptor for the enzyme in this species is believed to be plastoquinone. Couples the redox reaction to proton translocation, and thus conserves the redox energy in a proton gradient. In Silene latifolia (White campion), this protein is NAD(P)H-quinone oxidoreductase subunit 2, chloroplastic.